The following is a 267-amino-acid chain: Undecaprenyl-diphosphatase (267 aa).

The next 8 membrane-spanning stretches (helical) occupy residues 1-21 (MSYF…FLPI), 39-59 (QGLA…VLYF), 83-103 (AKLA…GFVM), 111-131 (LRSA…LWYV), 149-169 (ALFI…RSGA), 189-209 (FLMS…KLVT), 218-238 (FLLT…HFFL), and 245-265 (GMTP…AFLL).

It belongs to the UppP family.

The protein resides in the cell inner membrane. It carries out the reaction di-trans,octa-cis-undecaprenyl diphosphate + H2O = di-trans,octa-cis-undecaprenyl phosphate + phosphate + H(+). Catalyzes the dephosphorylation of undecaprenyl diphosphate (UPP). Confers resistance to bacitracin. The chain is Undecaprenyl-diphosphatase from Vibrio cholerae serotype O1 (strain ATCC 39315 / El Tor Inaba N16961).